The sequence spans 349 residues: MAAEEEEMDSTDACERSGWLTGWLPTWCPTSTSHLKEAEEKILKCVPCIYKKGPVRISNGNKIWTLKLSHNISNKIPLVLLHGFGGGLGLWALNFGDLCTNRPVYAFDLLGFGRSSRPRFDTDAEEVENQFVESIEEWRCALGLDKVILLGHNLGGFLAAAYSLKYPSRVSHLILVEPWGFPERPDLADQERPIPVWIRALGAALTPFNPLAGLRIAGPFGLSLVQRLRPDFKRKYSSMFEDDTVTEYIYHCNVQTPSGETAFKNMTIPYGWAKRPMLHRIGKMNPDIPVSVIYGARSCIDGNSGTSIQSLRPHSYVKTIAILGAGHYVYADQPEDFNLKVKEICDTVD.

At Ala-2 the chain carries N-acetylalanine. The 109-residue stretch at 77 to 185 folds into the AB hydrolase-1 domain; the sequence is PLVLLHGFGG…VEPWGFPERP (109 aa). The short motif at 327 to 332 is the HXXXXD motif element; that stretch reads HYVYAD.

It belongs to the peptidase S33 family. ABHD4/ABHD5 subfamily. In terms of assembly, interacts with ADRP, PLIN and PNPLA2. Interacts with PLIN5; promotes interaction with PNPLA2.

The protein localises to the cytoplasm. It is found in the lipid droplet. The enzyme catalyses a 1-acyl-sn-glycero-3-phosphate + an acyl-CoA = a 1,2-diacyl-sn-glycero-3-phosphate + CoA. The catalysed reaction is 1-(9Z-octadecenoyl)-sn-glycero-3-phosphate + (9Z)-octadecenoyl-CoA = 1,2-di-(9Z-octadecenoyl)-sn-glycero-3-phosphate + CoA. It catalyses the reaction 1-(9Z-octadecenoyl)-sn-glycero-3-phosphate + hexadecanoyl-CoA = 1-(9Z)-octadecenoyl-2-hexadecanoyl-sn-glycero-3-phosphate + CoA. It carries out the reaction 1-(9Z-octadecenoyl)-sn-glycero-3-phosphate + octadecanoyl-CoA = 1-(9Z-octadecenoyl)-2-octadecanoyl-sn-glycero-3-phosphate + CoA. The enzyme catalyses 1-(9Z-octadecenoyl)-sn-glycero-3-phosphate + (5Z,8Z,11Z,14Z)-eicosatetraenoyl-CoA = 1-(9Z)-octadecenoyl-2-(5Z,8Z,11Z,14Z)-eicosatetraenoyl-sn-glycero-3-phosphate + CoA. The catalysed reaction is eicosanoyl-CoA + 1-(9Z-octadecenoyl)-sn-glycero-3-phosphate = 1-(9Z)-octadecenoyl-2-eicosanoyl-sn-glycero-3-phosphate + CoA. It catalyses the reaction 1-hexadecanoyl-sn-glycero-3-phosphate + (9Z)-octadecenoyl-CoA = 1-hexadecanoyl-2-(9Z-octadecenoyl)-sn-glycero-3-phosphate + CoA. It carries out the reaction 1-octadecanoyl-sn-glycero-3-phosphate + (9Z)-octadecenoyl-CoA = 1-octadecanoyl-2-(9Z-octadecenoyl)-sn-glycero-3-phosphate + CoA. The enzyme catalyses 1-(5Z,8Z,11Z,14Z-eicosatetraenoyl)-sn-glycero-3-phosphate + (9Z)-octadecenoyl-CoA = 1-(5Z,8Z,11Z,14Z)-eicosatetraenoyl-2-(9Z)-octadecenoyl-sn-glycero-3-phosphate + CoA. Its activity is regulated as follows. Acyltransferase activity is inhibited by detergents such as Triton X-100 and 3-[(3-cholamidopropyl)dimethylammonio]-1-propanesulfonate (CHAPS). Acyltransferase activity is inhibited by the presence of magnesium and calcium. In terms of biological role, coenzyme A-dependent lysophosphatidic acid acyltransferase that catalyzes the transfer of an acyl group on a lysophosphatidic acid. Functions preferentially with 1-oleoyl-lysophosphatidic acid followed by 1-palmitoyl-lysophosphatidic acid, 1-stearoyl-lysophosphatidic acid and 1-arachidonoyl-lysophosphatidic acid as lipid acceptor. Functions preferentially with arachidonoyl-CoA followed by oleoyl-CoA as acyl group donors. Functions in phosphatidic acid biosynthesis. May regulate the cellular storage of triacylglycerol through activation of the phospholipase PNPLA2. Involved in keratinocyte differentiation. Regulates lipid droplet fusion. The chain is 1-acylglycerol-3-phosphate O-acyltransferase ABHD5 from Sus scrofa (Pig).